We begin with the raw amino-acid sequence, 457 residues long: Subtilisin-like serine protease Pen c 2 (457 aa).

The N-terminal stretch at 1-16 (MKGFLGLALLPLLTAA) is a signal peptide. Residues 17 to 136 (SPVSVESIHN…IEKDSEVHHF (120 aa)) constitute a propeptide, removed in mature form. Residues 43–134 (SYIVVFKKHV…DYIEKDSEVH (92 aa)) enclose the Inhibitor I9 domain. The Peptidase S8 domain maps to 146–457 (PWGLARISHR…YTDIVAQGGY (312 aa)). Active-site charge relay system residues include Asp-182 and His-214. N-linked (GlcNAc...) asparagine glycans are attached at residues Asn-244 and Asn-284. The active-site Charge relay system is the Ser-380. Asn-447 carries N-linked (GlcNAc...) asparagine glycosylation.

Belongs to the peptidase S8 family.

In terms of biological role, serine protease. This is Subtilisin-like serine protease Pen c 2 from Penicillium citrinum.